Here is a 249-residue protein sequence, read N- to C-terminus: NAD(P)H-quinone oxidoreductase subunit T, chloroplastic (249 aa).

The transit peptide at 1-45 directs the protein to the chloroplast; that stretch reads MAYATSTYARTSCIILPKIQNGAHFTDDTKAFRRITARRVTRIYA. Residues 44 to 84 are disordered; the sequence is YASQGPTKPSKPSPGVDTRIHWESPDEGWIGGRSDPAKSVD. One can recognise a J domain in the interval 106–172; that stretch reads SHYQFLGVST…ETRRFYDWTL (67 aa). The helical transmembrane segment at 224–244 threads the bilayer; it reads LTFDILIVLFAVCCIAFVIVF.

Part of the chloroplast NDH complex, composed of a mixture of chloroplast and nucleus encoded subunits. Component of the electron donor-binding subcomplex, at least composed of NDHS, NDHT and NDHU.

The protein resides in the plastid. It localises to the chloroplast thylakoid membrane. The enzyme catalyses a plastoquinone + NADH + (n+1) H(+)(in) = a plastoquinol + NAD(+) + n H(+)(out). The catalysed reaction is a plastoquinone + NADPH + (n+1) H(+)(in) = a plastoquinol + NADP(+) + n H(+)(out). Its function is as follows. NDH shuttles electrons from NAD(P)H:plastoquinone, via FMN and iron-sulfur (Fe-S) centers, to quinones in the photosynthetic chain and possibly in a chloroplast respiratory chain. The immediate electron acceptor for the enzyme in this species is believed to be plastoquinone. Couples the redox reaction to proton translocation, and thus conserves the redox energy in a proton gradient. Required for the accumulation of both the NDH subcomplex A and NDHS. In Arabidopsis thaliana (Mouse-ear cress), this protein is NAD(P)H-quinone oxidoreductase subunit T, chloroplastic.